A 302-amino-acid polypeptide reads, in one-letter code: tRNA pseudouridine synthase B (302 aa).

The active-site Nucleophile is the Asp40.

It belongs to the pseudouridine synthase TruB family. Type 1 subfamily.

The enzyme catalyses uridine(55) in tRNA = pseudouridine(55) in tRNA. Functionally, responsible for synthesis of pseudouridine from uracil-55 in the psi GC loop of transfer RNAs. In Shouchella clausii (strain KSM-K16) (Alkalihalobacillus clausii), this protein is tRNA pseudouridine synthase B.